The following is a 208-amino-acid chain: Protein-L-isoaspartate O-methyltransferase (208 aa).

Residue S59 is part of the active site.

The protein belongs to the methyltransferase superfamily. L-isoaspartyl/D-aspartyl protein methyltransferase family.

The protein resides in the cytoplasm. It catalyses the reaction [protein]-L-isoaspartate + S-adenosyl-L-methionine = [protein]-L-isoaspartate alpha-methyl ester + S-adenosyl-L-homocysteine. Catalyzes the methyl esterification of L-isoaspartyl residues in peptides and proteins that result from spontaneous decomposition of normal L-aspartyl and L-asparaginyl residues. It plays a role in the repair and/or degradation of damaged proteins. The sequence is that of Protein-L-isoaspartate O-methyltransferase from Cronobacter sakazakii (strain ATCC BAA-894) (Enterobacter sakazakii).